The sequence spans 437 residues: Lipopolysaccharide biosynthesis protein RfbH (437 aa).

Belongs to the DegT/DnrJ/EryC1 family. Requires pyridoxal 5'-phosphate as cofactor.

It participates in bacterial outer membrane biogenesis; LPS O-antigen biosynthesis. The polypeptide is Lipopolysaccharide biosynthesis protein RfbH (rfbH) (Salmonella typhimurium (strain LT2 / SGSC1412 / ATCC 700720)).